The primary structure comprises 390 residues: Homeobox protein Meis1 (390 aa).

Residues 108 to 192 (GGDVCSSESF…IDLVIDDREG (85 aa)) form the MEIS N-terminal domain. A compositionally biased stretch (basic and acidic residues) spans 190 to 202 (REGGSKSDSEDIT). The tract at residues 190-279 (REGGSKSDSE…KKRHKKRGIF (90 aa)) is disordered. A compositionally biased stretch (polar residues) spans 203-213 (RSANLTDQPSW). The segment at residues 272–334 (RHKKRGIFPK…NARRRIVQPM (63 aa)) is a DNA-binding region (homeobox; TALE-type). The interval 299-329 (YPSEEQKKQLAQDTGLTILQVNNWFINARRR) is interaction with DNA. Residues 335–390 (IDQSNRAVSQGTPYNPDGQPMGGFVMDGQQHMGIRAPGPMSGMGMNMGMEGQWHYM) are required for transcriptional activation.

Belongs to the TALE/MEIS homeobox family. In terms of assembly, interacts with the N-terminal region of PBX1 to form a heterodimer which binds DNA including a cAMP-responsive sequence in CYP17. Also forms heterodimers with PBX2. Forms heterotrimers with PBX1 or PBX2 and a number of HOX proteins including HOXA9, HOXD4 and HOXD9 where it acts as a non-DNA-binding partner. Also forms heterotrimers with PBX1 and HOX proteins including HOXD9 and HOXD10 where PBX1 is the non-DNA-binding partner. Heterodimer with DLX3. Heterodimer with HOXB13. In terms of tissue distribution, expressed at low level in normal immunohepatopoietic tissues, including the fetal liver. Expressed in a subset of myeloid leukemia cell lines, with the highest expression seen in those with a megakaryocytic-erythroid phenotype. Also expressed at high levels in the cerebellum.

It is found in the nucleus. Functionally, acts as a transcriptional regulator of PAX6. Acts as a transcriptional activator of PF4 in complex with PBX1 or PBX2. Required for hematopoiesis, megakaryocyte lineage development and vascular patterning. May function as a cofactor for HOXA7 and HOXA9 in the induction of myeloid leukemias. This chain is Homeobox protein Meis1 (MEIS1), found in Homo sapiens (Human).